An 80-amino-acid polypeptide reads, in one-letter code: Cytochrome c oxidase subunit 7A1, mitochondrial (80 aa).

A mitochondrion-targeting transit peptide spans 1–21; the sequence is MRALRVSQALVRSFSSTARNR. Over 22-46 the chain is Mitochondrial matrix; that stretch reads LENRVAEKQKIFQADNDLPVHLKGG. Residues 47-75 traverse the membrane as a helical segment; sequence ATDNILYRVTMTLCLGGTVYSLYCLGWAS. Residues 76–80 lie on the Mitochondrial intermembrane side of the membrane; it reads FPHKK.

It belongs to the cytochrome c oxidase VIIa family. Component of the complex IV (CIV, cytochrome c oxidase), a multisubunit enzyme composed of 14 subunits. The complex is composed of a catalytic core of 3 subunits MT-CO1, MT-CO2 and MT-CO3, encoded in the mitochondrial DNA, and 11 supernumerary subunits COX4I1 (or COX4I2), COX5A, COX5B, COX6A2 (or COX6A1), COX6B1 (or COX6B2), COX6C, COX7A1 (or COX7A2), COX7B, COX7C, COX8B and NDUFA4, which are encoded in the nuclear genome. The complex exists as a monomer or a dimer and forms supercomplexes (SCs) in the inner mitochondrial membrane with NADH-ubiquinone oxidoreductase (complex I, CI) and ubiquinol-cytochrome c oxidoreductase (cytochrome b-c1 complex, complex III, CIII), resulting in different assemblies (supercomplex SCI(1)III(2)IV(1) and megacomplex MCI(2)III(2)IV(2)).

The protein resides in the mitochondrion inner membrane. It participates in energy metabolism; oxidative phosphorylation. Functionally, component of the mitochondrial respiratory complex IV (CIV, also named cytochrome c oxidase complex), the last enzyme in the mitochondrial electron transport chain which drives oxidative phosphorylation. The CIV complex is the component of the respiratory chain that catalyzes the reduction of oxygen to water. Acts as an assembly factor that specifically drives the homodimerization of CIV complexes, mediating the formation of mitochondrial respiratory supercomplexes (respirasomes) containing two CIV: supercomplxes with two molecules of CIV show improved activity. Despite being highly expressed in brown adipose tissue, not required for thermogenesis. The polypeptide is Cytochrome c oxidase subunit 7A1, mitochondrial (COX7A1) (Sus scrofa (Pig)).